Consider the following 399-residue polypeptide: S-adenosylmethionine synthase (399 aa).

His-19 is an ATP binding site. A Mg(2+)-binding site is contributed by Asp-21. Glu-47 serves as a coordination point for K(+). Residues Glu-60 and Gln-103 each coordinate L-methionine. The interval 103-113 (QSPDIAQGVNQ) is flexible loop. Residues 179–181 (DGK), 246–247 (RF), Asp-255, 261–262 (RK), Ala-278, and Lys-282 each bind ATP. L-methionine is bound at residue Asp-255. Position 286 (Lys-286) interacts with L-methionine.

It belongs to the AdoMet synthase family. As to quaternary structure, homotetramer; dimer of dimers. Mg(2+) serves as cofactor. It depends on K(+) as a cofactor.

Its subcellular location is the cytoplasm. It carries out the reaction L-methionine + ATP + H2O = S-adenosyl-L-methionine + phosphate + diphosphate. The protein operates within amino-acid biosynthesis; S-adenosyl-L-methionine biosynthesis; S-adenosyl-L-methionine from L-methionine: step 1/1. Functionally, catalyzes the formation of S-adenosylmethionine (AdoMet) from methionine and ATP. The overall synthetic reaction is composed of two sequential steps, AdoMet formation and the subsequent tripolyphosphate hydrolysis which occurs prior to release of AdoMet from the enzyme. The chain is S-adenosylmethionine synthase from Halalkalibacterium halodurans (strain ATCC BAA-125 / DSM 18197 / FERM 7344 / JCM 9153 / C-125) (Bacillus halodurans).